Consider the following 588-residue polypeptide: uncharacterized protein (588 aa).

Residues 1–19 (MRSTAYLTALLSFLGATHA) form the signal peptide. N-linked (GlcNAc...) asparagine glycosylation is found at asparagine 45 and asparagine 104. In terms of domain architecture, FAD-binding PCMH-type spans 118 to 303 (GQGRIPLYSA…TSVTLRTFKD (186 aa)). Residue histidine 156 is modified to Pros-8alpha-FAD histidine. 6 N-linked (GlcNAc...) asparagine glycosylation sites follow: asparagine 179, asparagine 312, asparagine 320, asparagine 351, asparagine 370, and asparagine 446.

The protein belongs to the oxygen-dependent FAD-linked oxidoreductase family. FAD serves as cofactor.

Its subcellular location is the secreted. This is an uncharacterized protein from Arthroderma benhamiae (strain ATCC MYA-4681 / CBS 112371) (Trichophyton mentagrophytes).